Reading from the N-terminus, the 212-residue chain is Peroxiredoxin-like 2A (212 aa).

Residues 3–101 (MWSLGLGAVG…DELGVPLYAV (99 aa)) form a thioredoxin fold region. A non-standard amino acid (selenocysteine) is located at residue selenocysteine 74. Cysteine 77 (redox-active) is an active-site residue.

The protein belongs to the peroxiredoxin-like PRXL2 family. PRXL2A subfamily. Expressed in kidney marrow.

It is found in the cytoplasm. Functionally, involved in redox regulation of the cell. Acts as an antioxidant. This is Peroxiredoxin-like 2A (prxl2a) from Danio rerio (Zebrafish).